Here is a 319-residue protein sequence, read N- to C-terminus: MDFVLKMKDKSLKNRKLTREEGLRLFNSNLEELIKEANNIRKEIHGDGIDLCSIINGKSGRCGEDCAFCAQSKYHKTNISEYPLLDYEKIKKVAKENEDEGVHRFSIVTSGRGLYGEEFERVITYYSNLNKELKINLCASHGIINKESLIKLKKAGVKRYHHNLETSRNCYDKICKTHSYEERVKTIKNAKEAGLEVCSGGIIGLGETIIDRIDLAITLRELEIKSIPINVLSAIKGTKLQHMIPLNEEEILRTIAVFRFINPEAKIRLAGGRYLLKNFGENAFKAGANATITGNLLTTCGNKIKDDKRLIENIGMRIF.

In terms of domain architecture, Radical SAM core spans 44–273 (IHGDGIDLCS…EAKIRLAGGR (230 aa)). [4Fe-4S] cluster is bound by residues Cys62, Cys66, and Cys69. 4 residues coordinate [2Fe-2S] cluster: Ser106, Cys138, Cys198, and Arg268.

This sequence belongs to the radical SAM superfamily. Biotin synthase family. Homodimer. [4Fe-4S] cluster is required as a cofactor. It depends on [2Fe-2S] cluster as a cofactor.

The catalysed reaction is (4R,5S)-dethiobiotin + (sulfur carrier)-SH + 2 reduced [2Fe-2S]-[ferredoxin] + 2 S-adenosyl-L-methionine = (sulfur carrier)-H + biotin + 2 5'-deoxyadenosine + 2 L-methionine + 2 oxidized [2Fe-2S]-[ferredoxin]. Its pathway is cofactor biosynthesis; biotin biosynthesis; biotin from 7,8-diaminononanoate: step 2/2. Catalyzes the conversion of dethiobiotin (DTB) to biotin by the insertion of a sulfur atom into dethiobiotin via a radical-based mechanism. The sequence is that of Biotin synthase from Clostridium perfringens (strain ATCC 13124 / DSM 756 / JCM 1290 / NCIMB 6125 / NCTC 8237 / Type A).